The primary structure comprises 102 residues: Large ribosomal subunit protein bL21 (102 aa).

The protein belongs to the bacterial ribosomal protein bL21 family. In terms of assembly, part of the 50S ribosomal subunit. Contacts protein L20.

This protein binds to 23S rRNA in the presence of protein L20. In Shouchella clausii (strain KSM-K16) (Alkalihalobacillus clausii), this protein is Large ribosomal subunit protein bL21.